A 728-amino-acid polypeptide reads, in one-letter code: 1,4-alpha-glucan branching enzyme GlgB (728 aa).

Asp-405 functions as the Nucleophile in the catalytic mechanism. Glu-458 serves as the catalytic Proton donor.

Belongs to the glycosyl hydrolase 13 family. GlgB subfamily. As to quaternary structure, monomer.

It carries out the reaction Transfers a segment of a (1-&gt;4)-alpha-D-glucan chain to a primary hydroxy group in a similar glucan chain.. It participates in glycan biosynthesis; glycogen biosynthesis. Its function is as follows. Catalyzes the formation of the alpha-1,6-glucosidic linkages in glycogen by scission of a 1,4-alpha-linked oligosaccharide from growing alpha-1,4-glucan chains and the subsequent attachment of the oligosaccharide to the alpha-1,6 position. In Escherichia coli O6:H1 (strain CFT073 / ATCC 700928 / UPEC), this protein is 1,4-alpha-glucan branching enzyme GlgB.